Here is a 362-residue protein sequence, read N- to C-terminus: Peptide chain release factor 1 (362 aa).

Glutamine 237 carries the post-translational modification N5-methylglutamine.

It belongs to the prokaryotic/mitochondrial release factor family. Methylated by PrmC. Methylation increases the termination efficiency of RF1.

It is found in the cytoplasm. In terms of biological role, peptide chain release factor 1 directs the termination of translation in response to the peptide chain termination codons UAG and UAA. The protein is Peptide chain release factor 1 of Vibrio parahaemolyticus serotype O3:K6 (strain RIMD 2210633).